Here is a 65-residue protein sequence, read N- to C-terminus: Large ribosomal subunit protein bL32 (65 aa).

Residues methionine 1–serine 19 are compositionally biased toward basic residues. The interval methionine 1–serine 21 is disordered.

This sequence belongs to the bacterial ribosomal protein bL32 family.

The chain is Large ribosomal subunit protein bL32 from Mesomycoplasma hyopneumoniae (strain 7448) (Mycoplasma hyopneumoniae).